A 506-amino-acid chain; its full sequence is O-phosphoseryl-tRNA(Sec) selenium transferase (506 aa).

A tetramerization region spans residues 1 to 44 (MEHESFKASERLVTPAYIRQGREARRMHEQLVRQLVEQGKCPKE). Arginine 75 lines the pyridoxal 5'-phosphate pocket. The phosphate loop (P-loop) stretch occupies residues 96-106 (GRSGDISAIQP). Arginine 97, serine 98, and glutamine 105 together coordinate substrate. Arginine 271 provides a ligand contact to tRNA. Residue lysine 284 is modified to N6-(pyridoxal phosphate)lysine. Arginine 313 is a binding site for substrate. TRNA contacts are provided by arginine 398 and lysine 463.

The protein belongs to the SepSecS family. In terms of assembly, homotetramer formed by a catalytic dimer and a non-catalytic dimer serving as a binding platform that orients tRNASec for catalysis. Each tetramer binds the CCA ends of two tRNAs which point to the active sites of the catalytic dimer. The cofactor is pyridoxal 5'-phosphate.

It localises to the cytoplasm. It catalyses the reaction O-phospho-L-seryl-tRNA(Sec) + selenophosphate + H2O = L-selenocysteinyl-tRNA(Sec) + 2 phosphate. Its pathway is aminoacyl-tRNA biosynthesis; selenocysteinyl-tRNA(Sec) biosynthesis; selenocysteinyl-tRNA(Sec) from L-seryl-tRNA(Sec) (archaeal/eukaryal route): step 2/2. Its function is as follows. Converts O-phosphoseryl-tRNA(Sec) to selenocysteinyl-tRNA(Sec) required for selenoprotein biosynthesis. This is O-phosphoseryl-tRNA(Sec) selenium transferase (sepsecs) from Xenopus tropicalis (Western clawed frog).